The primary structure comprises 872 residues: DNA mismatch repair protein MutS (872 aa).

602–609 (GPNMSGKS) lines the ATP pocket.

It belongs to the DNA mismatch repair MutS family.

Functionally, this protein is involved in the repair of mismatches in DNA. It is possible that it carries out the mismatch recognition step. This protein has a weak ATPase activity. This chain is DNA mismatch repair protein MutS, found in Staphylococcus aureus (strain MRSA252).